The chain runs to 295 residues: F-box only protein 6 (295 aa).

The F-box domain maps to methionine 1–lysine 48. Residues phenylalanine 69–histidine 250 form the FBA domain. Serine 249 and serine 276 each carry phosphoserine. A Phosphothreonine modification is found at threonine 280.

As to quaternary structure, interacts with CHEK1 and CUL1. Part of a SCF (SKP1-cullin-F-box) protein ligase complex. Interacts with VCP. As to expression, present in liver and kidney (at protein level). Widely expressed.

It is found in the cytoplasm. Its pathway is protein modification; protein ubiquitination. Its function is as follows. Substrate-recognition component of some SCF (SKP1-CUL1-F-box protein)-type E3 ubiquitin ligase complexes. Involved in DNA damage response by specifically recognizing activated CHEK1 (phosphorylated on 'Ser-345'), promoting its ubiquitination and degradation. Ubiquitination of CHEK1 is required to ensure that activated CHEK1 does not accumulate as cells progress through S phase, or when replication forks encounter transient impediments during normal DNA replication. Involved in endoplasmic reticulum-associated degradation pathway (ERAD) for misfolded lumenal proteins by recognizing and binding sugar chains on unfolded glycoproteins that are retrotranslocated into the cytosol and promoting their ubiquitination and subsequent degradation. Able to recognize and bind denatured glycoproteins, which are modified with not only high-mannose but also complex-type oligosaccharides. Also recognizes sulfated glycans. This chain is F-box only protein 6 (Fbxo6), found in Mus musculus (Mouse).